A 215-amino-acid polypeptide reads, in one-letter code: Probable phosphoglycerate mutase GpmB (215 aa).

Residues R8–N15, Q21–G22, R58, K60, E82–M85, R104–R105, and G151–I152 contribute to the substrate site. H9 serves as the catalytic Tele-phosphohistidine intermediate. Catalysis depends on E82, which acts as the Proton donor/acceptor.

This sequence belongs to the phosphoglycerate mutase family. GpmB subfamily.

It catalyses the reaction (2R)-2-phosphoglycerate = (2R)-3-phosphoglycerate. It participates in carbohydrate degradation; glycolysis; pyruvate from D-glyceraldehyde 3-phosphate: step 3/5. The sequence is that of Probable phosphoglycerate mutase GpmB from Salmonella choleraesuis (strain SC-B67).